A 311-amino-acid chain; its full sequence is Mitochondrial arginine transporter BAC1 (311 aa).

Solcar repeat units lie at residues 12 to 101 (FGFY…AKLF), 111 to 203 (PRPE…LRYH), and 219 to 305 (VDMG…SMKM). 6 helical membrane-spanning segments follow: residues 18 to 38 (YVAG…FDTV), 76 to 96 (GATS…GIYS), 113 to 133 (PEII…VLCP), 178 to 197 (GGSA…FTVY), 222 to 242 (GIGV…VLPF), and 288 to 308 (AFPA…MLGI).

The protein belongs to the mitochondrial carrier (TC 2.A.29) family. In terms of tissue distribution, high expression in flowers and siliques. Lower expression in leaves and stems.

The protein localises to the mitochondrion inner membrane. With respect to regulation, inhibited by mercuric chloride. Its function is as follows. Mitochondrial arginine transporter that catalyzes the counter-exchange of arginine with lysine, ornithine, arginine and histidine. Substrate preference in reconstituted proteoliposomes is arginine &gt; lysine &gt; ornithine &gt; histidine. May be involved in the delivery of arginine, released from seed reserves, to mitochondrial arginase and the export of ornithine. This Arabidopsis thaliana (Mouse-ear cress) protein is Mitochondrial arginine transporter BAC1 (BAC1).